The sequence spans 447 residues: Ribosomal protein uS12 methylthiotransferase RimO (447 aa).

The region spanning 4–114 is the MTTase N-terminal domain; sequence PKVGFVSLGC…VMEAVHEYVP (111 aa). Residues Cys-13, Cys-49, Cys-78, Cys-147, Cys-151, and Cys-154 each coordinate [4Fe-4S] cluster. Residues 133-370 enclose the Radical SAM core domain; that stretch reads LTPKHYAYLK…MQVQQQISAA (238 aa). The region spanning 373–443 is the TRAM domain; it reads QKRIGQTMTV…EYDLFAKLIK (71 aa).

Belongs to the methylthiotransferase family. RimO subfamily. [4Fe-4S] cluster serves as cofactor.

Its subcellular location is the cytoplasm. The enzyme catalyses L-aspartate(89)-[ribosomal protein uS12]-hydrogen + (sulfur carrier)-SH + AH2 + 2 S-adenosyl-L-methionine = 3-methylsulfanyl-L-aspartate(89)-[ribosomal protein uS12]-hydrogen + (sulfur carrier)-H + 5'-deoxyadenosine + L-methionine + A + S-adenosyl-L-homocysteine + 2 H(+). Its function is as follows. Catalyzes the methylthiolation of an aspartic acid residue of ribosomal protein uS12. The polypeptide is Ribosomal protein uS12 methylthiotransferase RimO (Acinetobacter baumannii (strain SDF)).